The sequence spans 66 residues: Large ribosomal subunit protein uL29 (66 aa).

Belongs to the universal ribosomal protein uL29 family.

The chain is Large ribosomal subunit protein uL29 from Francisella tularensis subsp. tularensis (strain FSC 198).